Reading from the N-terminus, the 447-residue chain is Cysteine--tRNA ligase (447 aa).

Cysteine 28 lines the Zn(2+) pocket. The 'HIGH' region motif lies at 30–40; it reads PTVYNYIHIGN. Zn(2+)-binding residues include cysteine 211, histidine 236, and glutamate 240. Positions 268–272 match the 'KMSKS' region motif; the sequence is KMSKS. Position 271 (lysine 271) interacts with ATP.

Belongs to the class-I aminoacyl-tRNA synthetase family. Monomer. Zn(2+) serves as cofactor.

It is found in the cytoplasm. It catalyses the reaction tRNA(Cys) + L-cysteine + ATP = L-cysteinyl-tRNA(Cys) + AMP + diphosphate. This is Cysteine--tRNA ligase from Streptococcus pyogenes serotype M3 (strain ATCC BAA-595 / MGAS315).